A 363-amino-acid chain; its full sequence is ADP-ribosylhydrolase ARH3 (363 aa).

Mg(2+) is bound at residue Glu41. Thr64 carries the phosphothreonine modification. Residues Thr76, Asp77, and Asp78 each coordinate Mg(2+). Substrate is bound at residue Asp77. Substrate-binding positions include 146–152 (KGSYGNG), His182, Leu235, and Ile271. 3 residues coordinate Mg(2+): Asp314, Asp316, and Thr317.

The protein belongs to the ADP-ribosylglycohydrolase family. As to quaternary structure, monomer. Mg(2+) is required as a cofactor. In terms of tissue distribution, ubiquitous. Expressed in skin fibroblasts.

Its subcellular location is the nucleus. The protein localises to the cytoplasm. It localises to the chromosome. The protein resides in the mitochondrion matrix. It catalyses the reaction [(1''-&gt;2')-ADP-alpha-D-ribose](n) + H2O = [(1''-&gt;2')-ADP-alpha-D-ribose](n-1) + ADP-D-ribose. The enzyme catalyses 1''-O-acetyl-ADP-alpha-D-ribose + H2O = ADP-D-ribose + acetate + H(+). It carries out the reaction O-(ADP-D-ribosyl)-L-seryl-[protein] + H2O = ADP-D-ribose + L-seryl-[protein]. The catalysed reaction is alpha-NAD(+) + H2O = ADP-D-ribose + nicotinamide + H(+). Its activity is regulated as follows. The protein undergoes a dramatic conformational switch from closed to open states upon substrate-binding, which enables specific substrate recognition for the 1''-O-linkage. The glutamate flap (Glu-41) blocks substrate entrance to Mg(2+) in the unliganded closed state. In presence of substrate, Glu-41 is ejected from the active site: this closed-to-open transition significantly widens the substrate-binding channel and precisely positions the scissile 1''-O-linkage for cleavage while securing tightly 2'- and 3'-hydroxyls of ADP-ribose. ADP-ribosylhydrolase that preferentially hydrolyzes the scissile alpha-O-linkage attached to the anomeric C1'' position of ADP-ribose and acts on different substrates, such as proteins ADP-ribosylated on serine and threonine, free poly(ADP-ribose) and O-acetyl-ADP-D-ribose. Specifically acts as a serine mono-ADP-ribosylhydrolase by mediating the removal of mono-ADP-ribose attached to serine residues on proteins, thereby playing a key role in DNA damage response. Serine ADP-ribosylation of proteins constitutes the primary form of ADP-ribosylation of proteins in response to DNA damage. Does not hydrolyze ADP-ribosyl-arginine, -cysteine, -diphthamide, or -asparagine bonds. Also able to degrade protein free poly(ADP-ribose), which is synthesized in response to DNA damage: free poly(ADP-ribose) acts as a potent cell death signal and its degradation by ADPRHL2 protects cells from poly(ADP-ribose)-dependent cell death, a process named parthanatos. Also hydrolyzes free poly(ADP-ribose) in mitochondria. Specifically digests O-acetyl-ADP-D-ribose, a product of deacetylation reactions catalyzed by sirtuins. Specifically degrades 1''-O-acetyl-ADP-D-ribose isomer, rather than 2''-O-acetyl-ADP-D-ribose or 3''-O-acetyl-ADP-D-ribose isomers. The sequence is that of ADP-ribosylhydrolase ARH3 from Homo sapiens (Human).